The chain runs to 127 residues: Serum amyloid A protein (127 aa).

A signal peptide spans 1–18; the sequence is MKLLTSLFLLSLVLCVNS. The residue at position 19 (Gln-19) is a Pyrrolidone carboxylic acid. The interval 89 to 127 is disordered; the sequence is GGSSGRGVEDSMADQEANRWGRSGKDPNRYRPKGLDPKY. Residues 104–127 show a composition bias toward basic and acidic residues; that stretch reads EANRWGRSGKDPNRYRPKGLDPKY.

The protein belongs to the SAA family. Expressed by the liver; secreted in plasma.

Its subcellular location is the secreted. Major acute phase reactant. Apolipoprotein of the HDL complex. The sequence is that of Serum amyloid A protein (SAA1) from Notamacropus eugenii (Tammar wallaby).